Here is a 1092-residue protein sequence, read N- to C-terminus: Myelin regulatory factor (1092 aa).

Topologically, residues 1–730 (MDVEDENETL…CVSQRFLQAT (730 aa)) are cytoplasmic. Disordered stretches follow at residues 145–168 (SYAAGTLPDSPPDSGSEAYSPQQL), 187–210 (PPSRLEHPPPPHLQGPLPPHSIHQ), and 258–282 (QQHGAELPVHPSKKRKHSDSPTNTL). The segment covering 196–205 (PPHLQGPLPP) has biased composition (pro residues). The NDT80 DNA-binding region spans 246-507 (AQQSQMLHQL…SNPGQFESDS (262 aa)). Residues 553-662 (SDIRAKESVE…KLTDNLETRI (110 aa)) enclose the Peptidase S74 domain. The stretch at 646–677 (GAVKELCKLTDNLETRIDELERWSHKLAKLRR) forms a coiled coil. Residues 681 to 695 (MKSTNSHTGSSQFSR) are compositionally biased toward polar residues. The disordered stretch occupies residues 681-714 (MKSTNSHTGSSQFSRAGSVPYKQRPPKVMGKTVP). The helical transmembrane segment at 731-751 (IIALVIIMAFSVISMTTLYVL) threads the bilayer. At 752–1092 (NLRSEDDMLG…YYFRFYRLCD (341 aa)) the chain is on the lumenal side. 2 disordered regions span residues 798–817 (TTQLKGNTTPPPKITKSPDW) and 849–945 (ITRK…DSRY). Polar residues-rich tracts occupy residues 849–867 (ITRKTSAASAETISQTDPA) and 928–945 (TPITPMDRTQGNSNDSRY). Asn-941, Asn-961, Asn-974, and Asn-996 each carry an N-linked (GlcNAc...) asparagine glycan.

Belongs to the MRF family. Homotrimer. In terms of processing, follows autocatalytic cleavage via the peptidase S74 domain. Autoprocessing is apparently constitutive and is essential for transcriptional activity.

The protein localises to the endoplasmic reticulum membrane. Its subcellular location is the nucleus. The protein resides in the cytoplasm. In terms of biological role, constitutes a precursor of the transcription factor. Mediates the autocatalytic cleavage that releases the Myelin regulatory factor, N-terminal component that specifically activates transcription of central nervous system (CNS) myelin genes. Membrane-bound part that has no transcription factor activity and remains attached to the endoplasmic reticulum membrane following cleavage. Functionally, transcription factor that specifically activates expression of myelin genes during oligodendrocyte (OL) maturation, thereby playing a central role in oligodendrocyte maturation and CNS myelination. The protein is Myelin regulatory factor (myrf) of Xenopus laevis (African clawed frog).